Reading from the N-terminus, the 181-residue chain is UPF0397 protein STER_0346 (181 aa).

5 helical membrane-spanning segments follow: residues 11-31 (ATGIGAALFIIIGMFVNIPIF), 45-65 (LFSVIFGPITGFFMGFIGHAL), 72-92 (GNISWAWVLASGITGLVIGLF), 109-129 (IWFNLAQALGLLIGYGVVTPI), and 147-167 (FVAGVANFITIAIGGTLLLAI).

It belongs to the UPF0397 family.

Its subcellular location is the cell membrane. The polypeptide is UPF0397 protein STER_0346 (Streptococcus thermophilus (strain ATCC BAA-491 / LMD-9)).